A 255-amino-acid polypeptide reads, in one-letter code: Large ribosomal subunit protein uL4 (255 aa).

Belongs to the universal ribosomal protein uL4 family. Part of the 50S ribosomal subunit.

Functionally, one of the primary rRNA binding proteins, this protein initially binds near the 5'-end of the 23S rRNA. It is important during the early stages of 50S assembly. It makes multiple contacts with different domains of the 23S rRNA in the assembled 50S subunit and ribosome. Its function is as follows. Forms part of the polypeptide exit tunnel. The polypeptide is Large ribosomal subunit protein uL4 (Thermoplasma volcanium (strain ATCC 51530 / DSM 4299 / JCM 9571 / NBRC 15438 / GSS1)).